The sequence spans 751 residues: uncharacterized protein (751 aa).

Residues 73 to 169 form a disordered region; sequence FGVVHSHTPK…PVLIDDDTGE (97 aa). The segment covering 96-109 has biased composition (low complexity); it reads ATSTRRSATAQRAA. The segment covering 111–120 has biased composition (polar residues); it reads LKSSPVDQWS.

This is an uncharacterized protein from Invertebrate iridescent virus 3 (IIV-3).